The chain runs to 529 residues: Chromosomal replication initiator protein DnaA (529 aa).

The interval M1–T72 is domain I, interacts with DnaA modulators. The domain II stretch occupies residues T72–S192. The segment at R193–S409 is domain III, AAA+ region. 4 residues coordinate ATP: G237, G239, K240, and T241. The tract at residues N410–G529 is domain IV, binds dsDNA.

Belongs to the DnaA family. Oligomerizes as a right-handed, spiral filament on DNA at oriC.

It is found in the cytoplasm. Plays an essential role in the initiation and regulation of chromosomal replication. ATP-DnaA binds to the origin of replication (oriC) to initiate formation of the DNA replication initiation complex once per cell cycle. Binds the DnaA box (a 9 base pair repeat at the origin) and separates the double-stranded (ds)DNA. Forms a right-handed helical filament on oriC DNA; dsDNA binds to the exterior of the filament while single-stranded (ss)DNA is stabiized in the filament's interior. The ATP-DnaA-oriC complex binds and stabilizes one strand of the AT-rich DNA unwinding element (DUE), permitting loading of DNA polymerase. After initiation quickly degrades to an ADP-DnaA complex that is not apt for DNA replication. Binds acidic phospholipids. The sequence is that of Chromosomal replication initiator protein DnaA from Ralstonia pickettii (strain 12J).